We begin with the raw amino-acid sequence, 354 residues long: L-lactate dehydrogenase (354 aa).

NAD(+)-binding positions include 73–78 and Arg-120; that span reads DAVPDK. Substrate-binding residues include Arg-127, Asn-159, and Arg-190. Asn-159 is an NAD(+) binding site. His-214 serves as the catalytic Proton acceptor. Thr-269 lines the substrate pocket. Residues 302–332 form a disordered region; it reads HGIPDGTTSSSACPPRRPRRRPGRREMELTE.

The protein belongs to the LDH/MDH superfamily. LDH family. Homotetramer.

It carries out the reaction (S)-lactate + NAD(+) = pyruvate + NADH + H(+). It participates in fermentation; pyruvate fermentation to lactate; (S)-lactate from pyruvate: step 1/1. The protein is L-lactate dehydrogenase of Zea mays (Maize).